Consider the following 503-residue polypeptide: Probable cytosol aminopeptidase (503 aa).

Residues Lys274 and Asp279 each coordinate Mn(2+). Lys286 is a catalytic residue. 3 residues coordinate Mn(2+): Asp297, Asp356, and Glu358. Arg360 is an active-site residue.

This sequence belongs to the peptidase M17 family. It depends on Mn(2+) as a cofactor.

The protein localises to the cytoplasm. The catalysed reaction is Release of an N-terminal amino acid, Xaa-|-Yaa-, in which Xaa is preferably Leu, but may be other amino acids including Pro although not Arg or Lys, and Yaa may be Pro. Amino acid amides and methyl esters are also readily hydrolyzed, but rates on arylamides are exceedingly low.. It carries out the reaction Release of an N-terminal amino acid, preferentially leucine, but not glutamic or aspartic acids.. Presumably involved in the processing and regular turnover of intracellular proteins. Catalyzes the removal of unsubstituted N-terminal amino acids from various peptides. This chain is Probable cytosol aminopeptidase, found in Burkholderia ambifaria (strain ATCC BAA-244 / DSM 16087 / CCUG 44356 / LMG 19182 / AMMD) (Burkholderia cepacia (strain AMMD)).